Consider the following 469-residue polypeptide: MNLMPRYRQVADNFAIEDRPSKVAAPQLLLWNDSLAKAFNINVVPELRASTFSGNEQQAIAAVALGYSGHQFGHFSPRLGDGRAHLLGAVEDAQNQLWDIQLKGSGATPYSRGGDGRCALGPAIREYIMSEAMQALGIKTTRCLAVVGSGETVYRNPPQPGAIVTRLASSHIRVGSFQYLATQGDVAGLKNLADLAIERHYPKIQATGPERYLAFLAAVIKNQVELVVSWMRVGFIHGVMNTDNTLVSGETIDYGPCAMMNSFDFDTVFSSIDKQGRYAFGNQPNIANWNCARLAESLIPLVNDDDEQAVALMTPIIDGFAEQFNVEFSAMWATKLGLAGTDTADKELIAELLQLLKEHQLDYTNTFDALTESLTGGMSIPEVLVQWAGKWQKRTDDRSYTVMRAANPRVIPRNHVIEKILSEYNKTGSSELLHEFMQVMHTPYENTDKLAKFQDAPSSDKEYYTFCGT.

Positions 80, 82, 83, 103, 115, 116, 166, and 173 each coordinate ATP. Catalysis depends on Asp-243, which acts as the Proton acceptor. Asn-244 and Asp-253 together coordinate Mg(2+). Asp-253 lines the ATP pocket.

Belongs to the SELO family. Mg(2+) is required as a cofactor. It depends on Mn(2+) as a cofactor.

The catalysed reaction is L-seryl-[protein] + ATP = 3-O-(5'-adenylyl)-L-seryl-[protein] + diphosphate. It carries out the reaction L-threonyl-[protein] + ATP = 3-O-(5'-adenylyl)-L-threonyl-[protein] + diphosphate. It catalyses the reaction L-tyrosyl-[protein] + ATP = O-(5'-adenylyl)-L-tyrosyl-[protein] + diphosphate. The enzyme catalyses L-histidyl-[protein] + UTP = N(tele)-(5'-uridylyl)-L-histidyl-[protein] + diphosphate. The catalysed reaction is L-seryl-[protein] + UTP = O-(5'-uridylyl)-L-seryl-[protein] + diphosphate. It carries out the reaction L-tyrosyl-[protein] + UTP = O-(5'-uridylyl)-L-tyrosyl-[protein] + diphosphate. Functionally, nucleotidyltransferase involved in the post-translational modification of proteins. It can catalyze the addition of adenosine monophosphate (AMP) or uridine monophosphate (UMP) to a protein, resulting in modifications known as AMPylation and UMPylation. The sequence is that of Protein nucleotidyltransferase YdiU from Pseudoalteromonas translucida (strain TAC 125).